Here is a 721-residue protein sequence, read N- to C-terminus: Ribonuclease R (721 aa).

The RNB domain occupies 249-587 (RRSIIDREII…VHRLLWMFIF (339 aa)). The S1 motif domain occupies 639 to 719 (GKEFIGVVTT…LTRKIDFELV (81 aa)).

It belongs to the RNR ribonuclease family. RNase R subfamily.

The protein resides in the cytoplasm. It carries out the reaction Exonucleolytic cleavage in the 3'- to 5'-direction to yield nucleoside 5'-phosphates.. In terms of biological role, 3'-5' exoribonuclease that releases 5'-nucleoside monophosphates and is involved in maturation of structured RNAs. In Ureaplasma parvum serovar 3 (strain ATCC 700970), this protein is Ribonuclease R.